The following is a 125-amino-acid chain: Large ribosomal subunit protein bL21 (125 aa).

Residues 75–89 (FKKRRRQNSKRKRGH) show a composition bias toward basic residues. 2 disordered regions span residues 75 to 94 (FKKR…QDLT) and 103 to 125 (AGGA…APEA). Residues 106–125 (ASPAAAAASSETPAASAPEA) show a composition bias toward low complexity.

Belongs to the bacterial ribosomal protein bL21 family. In terms of assembly, part of the 50S ribosomal subunit. Contacts protein L20.

Its function is as follows. This protein binds to 23S rRNA in the presence of protein L20. This chain is Large ribosomal subunit protein bL21, found in Methylocella silvestris (strain DSM 15510 / CIP 108128 / LMG 27833 / NCIMB 13906 / BL2).